The sequence spans 475 residues: UDP-N-acetylmuramate--L-alanine ligase (475 aa).

Position 125-131 (Gly-125–Ser-131) interacts with ATP.

The protein belongs to the MurCDEF family.

The protein resides in the cytoplasm. It carries out the reaction UDP-N-acetyl-alpha-D-muramate + L-alanine + ATP = UDP-N-acetyl-alpha-D-muramoyl-L-alanine + ADP + phosphate + H(+). Its pathway is cell wall biogenesis; peptidoglycan biosynthesis. In terms of biological role, cell wall formation. This chain is UDP-N-acetylmuramate--L-alanine ligase, found in Mycolicibacterium gilvum (strain PYR-GCK) (Mycobacterium gilvum (strain PYR-GCK)).